The primary structure comprises 213 residues: Orotate phosphoribosyltransferase (213 aa).

Residue lysine 26 coordinates 5-phospho-alpha-D-ribose 1-diphosphate. Orotate is bound at residue 34–35 (FF). 5-phospho-alpha-D-ribose 1-diphosphate-binding positions include 72 to 73 (YK), arginine 99, lysine 100, lysine 103, histidine 105, and 124 to 132 (DDVITAGTA). Threonine 128 and arginine 156 together coordinate orotate.

This sequence belongs to the purine/pyrimidine phosphoribosyltransferase family. PyrE subfamily. In terms of assembly, homodimer. Mg(2+) serves as cofactor.

The enzyme catalyses orotidine 5'-phosphate + diphosphate = orotate + 5-phospho-alpha-D-ribose 1-diphosphate. Its pathway is pyrimidine metabolism; UMP biosynthesis via de novo pathway; UMP from orotate: step 1/2. Its function is as follows. Catalyzes the transfer of a ribosyl phosphate group from 5-phosphoribose 1-diphosphate to orotate, leading to the formation of orotidine monophosphate (OMP). The polypeptide is Orotate phosphoribosyltransferase (Salmonella choleraesuis (strain SC-B67)).